Here is a 426-residue protein sequence, read N- to C-terminus: Serine--tRNA ligase (426 aa).

L-serine is bound at residue 231–233 (TAE). 262–264 (RSE) serves as a coordination point for ATP. Residue Glu-285 participates in L-serine binding. 349-352 (EISS) contacts ATP. L-serine is bound at residue Ser-385.

Belongs to the class-II aminoacyl-tRNA synthetase family. Type-1 seryl-tRNA synthetase subfamily. As to quaternary structure, homodimer. The tRNA molecule binds across the dimer.

It localises to the cytoplasm. It carries out the reaction tRNA(Ser) + L-serine + ATP = L-seryl-tRNA(Ser) + AMP + diphosphate + H(+). The catalysed reaction is tRNA(Sec) + L-serine + ATP = L-seryl-tRNA(Sec) + AMP + diphosphate + H(+). The protein operates within aminoacyl-tRNA biosynthesis; selenocysteinyl-tRNA(Sec) biosynthesis; L-seryl-tRNA(Sec) from L-serine and tRNA(Sec): step 1/1. Functionally, catalyzes the attachment of serine to tRNA(Ser). Is also able to aminoacylate tRNA(Sec) with serine, to form the misacylated tRNA L-seryl-tRNA(Sec), which will be further converted into selenocysteinyl-tRNA(Sec). The chain is Serine--tRNA ligase from Lysinibacillus sphaericus (strain C3-41).